Here is a 314-residue protein sequence, read N- to C-terminus: 4-hydroxy-3-methylbut-2-enyl diphosphate reductase (314 aa).

Residue Cys12 participates in [4Fe-4S] cluster binding. (2E)-4-hydroxy-3-methylbut-2-enyl diphosphate-binding residues include His41 and His74. His41 and His74 together coordinate dimethylallyl diphosphate. Residues His41 and His74 each coordinate isopentenyl diphosphate. Position 96 (Cys96) interacts with [4Fe-4S] cluster. Residue His124 coordinates (2E)-4-hydroxy-3-methylbut-2-enyl diphosphate. His124 serves as a coordination point for dimethylallyl diphosphate. His124 lines the isopentenyl diphosphate pocket. Glu126 (proton donor) is an active-site residue. Residue Thr167 coordinates (2E)-4-hydroxy-3-methylbut-2-enyl diphosphate. Residue Cys197 participates in [4Fe-4S] cluster binding. (2E)-4-hydroxy-3-methylbut-2-enyl diphosphate-binding residues include Ser225, Ser226, Asn227, and Ser269. Ser225, Ser226, Asn227, and Ser269 together coordinate dimethylallyl diphosphate. The isopentenyl diphosphate site is built by Ser225, Ser226, Asn227, and Ser269.

Belongs to the IspH family. Requires [4Fe-4S] cluster as cofactor.

The catalysed reaction is isopentenyl diphosphate + 2 oxidized [2Fe-2S]-[ferredoxin] + H2O = (2E)-4-hydroxy-3-methylbut-2-enyl diphosphate + 2 reduced [2Fe-2S]-[ferredoxin] + 2 H(+). It catalyses the reaction dimethylallyl diphosphate + 2 oxidized [2Fe-2S]-[ferredoxin] + H2O = (2E)-4-hydroxy-3-methylbut-2-enyl diphosphate + 2 reduced [2Fe-2S]-[ferredoxin] + 2 H(+). Its pathway is isoprenoid biosynthesis; dimethylallyl diphosphate biosynthesis; dimethylallyl diphosphate from (2E)-4-hydroxy-3-methylbutenyl diphosphate: step 1/1. It functions in the pathway isoprenoid biosynthesis; isopentenyl diphosphate biosynthesis via DXP pathway; isopentenyl diphosphate from 1-deoxy-D-xylulose 5-phosphate: step 6/6. Catalyzes the conversion of 1-hydroxy-2-methyl-2-(E)-butenyl 4-diphosphate (HMBPP) into a mixture of isopentenyl diphosphate (IPP) and dimethylallyl diphosphate (DMAPP). Acts in the terminal step of the DOXP/MEP pathway for isoprenoid precursor biosynthesis. The protein is 4-hydroxy-3-methylbut-2-enyl diphosphate reductase of Aliivibrio fischeri (strain MJ11) (Vibrio fischeri).